We begin with the raw amino-acid sequence, 222 residues long: Pyridoxine/pyridoxamine 5'-phosphate oxidase (222 aa).

FMN-binding positions include 69 to 74 (RMVLLK), 84 to 85 (YT), K91, and Q113. K74 is a binding site for substrate. Substrate is bound by residues Y131, R135, and S139. Residues 148 to 149 (QS) and W193 contribute to the FMN site. 199–201 (RLH) contacts substrate. Residue R203 participates in FMN binding.

Belongs to the pyridoxamine 5'-phosphate oxidase family. Homodimer. FMN is required as a cofactor.

The catalysed reaction is pyridoxamine 5'-phosphate + O2 + H2O = pyridoxal 5'-phosphate + H2O2 + NH4(+). It catalyses the reaction pyridoxine 5'-phosphate + O2 = pyridoxal 5'-phosphate + H2O2. It functions in the pathway cofactor metabolism; pyridoxal 5'-phosphate salvage; pyridoxal 5'-phosphate from pyridoxamine 5'-phosphate: step 1/1. Its pathway is cofactor metabolism; pyridoxal 5'-phosphate salvage; pyridoxal 5'-phosphate from pyridoxine 5'-phosphate: step 1/1. Catalyzes the oxidation of either pyridoxine 5'-phosphate (PNP) or pyridoxamine 5'-phosphate (PMP) into pyridoxal 5'-phosphate (PLP). The polypeptide is Pyridoxine/pyridoxamine 5'-phosphate oxidase (Maricaulis maris (strain MCS10) (Caulobacter maris)).